Consider the following 426-residue polypeptide: Enolase (426 aa).

Glycine 41 provides a ligand contact to phosphoenolpyruvate. Serine 43 contributes to the Mg(2+) binding site. Phosphoenolpyruvate is bound at residue glutamate 165. Positions 165 and 206 each coordinate (2R)-2-phosphoglycerate. Catalysis depends on glutamate 206, which acts as the Proton donor. Mg(2+) is bound by residues aspartate 243, glutamate 286, and aspartate 313. Phosphoenolpyruvate is bound by residues aspartate 313, lysine 338, arginine 367, serine 368, and lysine 389. The (2R)-2-phosphoglycerate site is built by lysine 338, arginine 367, and serine 368. The Proton acceptor role is filled by lysine 338.

Belongs to the enolase family. In terms of assembly, homodimer. Mg(2+) is required as a cofactor.

The protein resides in the cytoplasm. Its subcellular location is the secreted. The protein localises to the cell surface. The catalysed reaction is (2R)-2-phosphoglycerate = phosphoenolpyruvate + H2O. The protein operates within carbohydrate degradation; glycolysis; pyruvate from D-glyceraldehyde 3-phosphate: step 4/5. Catalyzes the reversible conversion of 2-phosphoglycerate (2-PG) into phosphoenolpyruvate (PEP). It is essential for the degradation of carbohydrates via glycolysis. The polypeptide is Enolase (Chloroflexus aurantiacus (strain ATCC 29366 / DSM 635 / J-10-fl)).